Here is a 170-residue protein sequence, read N- to C-terminus: Ureidoglycolate lyase 1 (170 aa).

This sequence belongs to the ureidoglycolate lyase family. Homodimer. Ni(2+) is required as a cofactor.

It catalyses the reaction (S)-ureidoglycolate = urea + glyoxylate. It functions in the pathway nitrogen metabolism; (S)-allantoin degradation. Functionally, catalyzes the catabolism of the allantoin degradation intermediate (S)-ureidoglycolate, generating urea and glyoxylate. Involved in the utilization of allantoin as nitrogen source. In Rhizobium meliloti (strain 1021) (Ensifer meliloti), this protein is Ureidoglycolate lyase 1.